The sequence spans 300 residues: Cytochrome b (300 aa).

6 helical membrane-spanning segments follow: residues 28-48, 72-94, 107-127, 168-187, 223-243, and 279-299; these read YGFLLGIVFFIQILKGVLLAL, WCFRYMHATGASFVFILTYLHIL, SWISGLMIFLISIVTAFYGYV, FFVFIYFPFIALCQSLFGIL, IPNKTAGLLVMLASLQILFLL, and IGCQLPQILHFIWSFIYYIIL. Residues H78 and H92 each contribute to the heme b site.

The protein belongs to the cytochrome b family. As to quaternary structure, the main subunits of complex b-c1 are: cytochrome b, cytochrome c1 and the Rieske protein. The cofactor is heme b.

Its subcellular location is the mitochondrion inner membrane. Functionally, component of the ubiquinol-cytochrome c reductase complex (complex III or cytochrome b-c1 complex) that is part of the mitochondrial respiratory chain. The b-c1 complex mediates electron transfer from ubiquinol to cytochrome c. Contributes to the generation of a proton gradient across the mitochondrial membrane that is then used for ATP synthesis. The polypeptide is Cytochrome b (MT-CYB) (Plasmodium gallinaceum).